A 176-amino-acid chain; its full sequence is Ribosome maturation factor RimM (176 aa).

The 73-residue stretch at 100-172 (PDTYYDHQLV…IVEIDPPHGL (73 aa)) folds into the PRC barrel domain.

Belongs to the RimM family. Binds ribosomal protein uS19.

The protein resides in the cytoplasm. In terms of biological role, an accessory protein needed during the final step in the assembly of 30S ribosomal subunit, possibly for assembly of the head region. Essential for efficient processing of 16S rRNA. May be needed both before and after RbfA during the maturation of 16S rRNA. It has affinity for free ribosomal 30S subunits but not for 70S ribosomes. This Mycobacterium bovis (strain ATCC BAA-935 / AF2122/97) protein is Ribosome maturation factor RimM.